Reading from the N-terminus, the 158-residue chain is Protein E6 (158 aa).

2 zinc fingers span residues 32-68 (CVYCKATLERTEVYQFAFKDLCIVYRDCIAYAACHKC) and 105-141 (CLRCQKPLNPAEKRRHLKDKRRFHSIAGQYRGQCNTC). A PDZ-binding domain motif is present at residues 156-158 (TQV).

This sequence belongs to the papillomaviridae E6 protein family. As to quaternary structure, forms homodimers. Interacts with ubiquitin-protein ligase UBE3A/E6-AP and thus forms a complex with human TP53. Interacts with human NFX1 and MAGI3. Interacts with human IRF3; this interaction inhibits the establishment of antiviral state. Interacts with human TYK2; this interaction inhibits JAK-STAT activation by interferon alpha. Interacts with host DLG1; this interaction leads to the proteasomal degradation of DLG1.

It is found in the host cytoplasm. The protein localises to the host nucleus. Its function is as follows. This protein has transforming activity in vitro. Plays a major role in the induction and maintenance of cellular transformation. Acts mainly as an oncoprotein by stimulating the destruction of many host cell key regulatory proteins. E6 associates with host UBE3A/E6-AP ubiquitin-protein ligase, and inactivates tumor suppressors TP53 and TP73 by targeting them to the 26S proteasome for degradation. In turn, DNA damage and chromosomal instabilities increase and lead to cell proliferation and cancer development. The complex E6/E6AP targets several other substrates to degradation via the proteasome including host DLG1 or NFX1, a repressor of human telomerase reverse transcriptase (hTERT). The resulting increased expression of hTERT prevents the shortening of telomere length leading to cell immortalization. Other cellular targets including BAK1, Fas-associated death domain-containing protein (FADD) and procaspase 8, are degraded by E6/E6AP causing inhibition of apoptosis. E6 also inhibits immune response by interacting with host IRF3 and TYK2. These interactions prevent IRF3 transcriptional activities and inhibit TYK2-mediated JAK-STAT activation by interferon alpha resulting in inhibition of the interferon signaling pathway. The sequence is that of Protein E6 from Homo sapiens (Human).